Reading from the N-terminus, the 260-residue chain is Triosephosphate isomerase (260 aa).

11-13 lines the substrate pocket; that stretch reads NWK. His103 serves as the catalytic Electrophile. Glu175 serves as the catalytic Proton acceptor. Residues Gly181, Ser220, and 241-242 each bind substrate; that span reads GG.

Belongs to the triosephosphate isomerase family. Homodimer.

Its subcellular location is the cytoplasm. The catalysed reaction is D-glyceraldehyde 3-phosphate = dihydroxyacetone phosphate. The protein operates within carbohydrate biosynthesis; gluconeogenesis. It participates in carbohydrate degradation; glycolysis; D-glyceraldehyde 3-phosphate from glycerone phosphate: step 1/1. Involved in the gluconeogenesis. Catalyzes stereospecifically the conversion of dihydroxyacetone phosphate (DHAP) to D-glyceraldehyde-3-phosphate (G3P). The sequence is that of Triosephosphate isomerase from Shewanella sp. (strain W3-18-1).